Reading from the N-terminus, the 699-residue chain is Elongation factor G (699 aa).

The tr-type G domain maps to 8–287; the sequence is EKLRNIGIVA…AVIDYLPSPI (280 aa). GTP-binding positions include 17-24, 85-89, and 139-142; these read AHIDAGKT, DTPGH, and NKMD.

The protein belongs to the TRAFAC class translation factor GTPase superfamily. Classic translation factor GTPase family. EF-G/EF-2 subfamily.

Its subcellular location is the cytoplasm. In terms of biological role, catalyzes the GTP-dependent ribosomal translocation step during translation elongation. During this step, the ribosome changes from the pre-translocational (PRE) to the post-translocational (POST) state as the newly formed A-site-bound peptidyl-tRNA and P-site-bound deacylated tRNA move to the P and E sites, respectively. Catalyzes the coordinated movement of the two tRNA molecules, the mRNA and conformational changes in the ribosome. This Aquifex aeolicus (strain VF5) protein is Elongation factor G (fusA).